The sequence spans 212 residues: Orotate phosphoribosyltransferase (212 aa).

Lysine 26 provides a ligand contact to 5-phospho-alpha-D-ribose 1-diphosphate. Position 34–35 (34–35 (FF)) interacts with orotate. 5-phospho-alpha-D-ribose 1-diphosphate contacts are provided by residues 72 to 73 (YK), arginine 99, lysine 100, lysine 103, histidine 105, and 124 to 132 (DDVITVGTA). Residues threonine 128 and arginine 156 each contribute to the orotate site.

It belongs to the purine/pyrimidine phosphoribosyltransferase family. PyrE subfamily. Homodimer. It depends on Mg(2+) as a cofactor.

It catalyses the reaction orotidine 5'-phosphate + diphosphate = orotate + 5-phospho-alpha-D-ribose 1-diphosphate. It participates in pyrimidine metabolism; UMP biosynthesis via de novo pathway; UMP from orotate: step 1/2. Catalyzes the transfer of a ribosyl phosphate group from 5-phosphoribose 1-diphosphate to orotate, leading to the formation of orotidine monophosphate (OMP). The protein is Orotate phosphoribosyltransferase of Ruthia magnifica subsp. Calyptogena magnifica.